The following is a 174-amino-acid chain: Ribosome maturation factor RimM (174 aa).

Positions 97-171 (SDGEYYWCDL…RMTVSLPEGL (75 aa)) constitute a PRC barrel domain.

Belongs to the RimM family. In terms of assembly, binds ribosomal protein uS19.

It localises to the cytoplasm. Functionally, an accessory protein needed during the final step in the assembly of 30S ribosomal subunit, possibly for assembly of the head region. Essential for efficient processing of 16S rRNA. May be needed both before and after RbfA during the maturation of 16S rRNA. It has affinity for free ribosomal 30S subunits but not for 70S ribosomes. The chain is Ribosome maturation factor RimM from Geotalea daltonii (strain DSM 22248 / JCM 15807 / FRC-32) (Geobacter daltonii).